A 576-amino-acid chain; its full sequence is Protein HYPER-SENSITIVITY-RELATED 4 (576 aa).

A helical membrane pass occupies residues 55–75 (LATAKTVLTTAASVAATAMLA). 306–313 (GPPGTGKS) contacts ATP. The segment at 508 to 532 (DKAKTEKQELENKKKTKEGTDSVVK) is disordered.

It belongs to the AAA ATPase family. BCS1 subfamily. Binds to the Yariv phenylglycoside (beta-D-Glc)(3). The cofactor is Mg(2+).

The protein resides in the membrane. The enzyme catalyses ATP + H2O = ADP + phosphate + H(+). The chain is Protein HYPER-SENSITIVITY-RELATED 4 from Arabidopsis thaliana (Mouse-ear cress).